The sequence spans 956 residues: DNA ligase 4 (956 aa).

Residues E307, K309, I310, R314, E371, F409, E476, K481, K498, and K500 each contribute to the ATP site. Residue K309 is the N6-AMP-lysine intermediate of the active site. E371 provides a ligand contact to Mg(2+). E476 is a Mg(2+) binding site. The disordered stretch occupies residues 666–700; that stretch reads LEDRKRRNAGPGRGAKRLKLANVSSDEDELGTDER. 2 consecutive BRCT domains span residues 700–793 and 857–956; these read RPTS…PRNL and PKGM…DYPL.

This sequence belongs to the ATP-dependent DNA ligase family. It depends on Mg(2+) as a cofactor.

Its subcellular location is the nucleus. It catalyses the reaction ATP + (deoxyribonucleotide)n-3'-hydroxyl + 5'-phospho-(deoxyribonucleotide)m = (deoxyribonucleotide)n+m + AMP + diphosphate.. In terms of biological role, DNA ligase involved in DNA non-homologous end joining (NHEJ); required for double-strand break (DSB) repair. This is DNA ligase 4 (LIG4) from Yarrowia lipolytica (strain CLIB 122 / E 150) (Yeast).